The sequence spans 115 residues: Large ribosomal subunit protein uL18 (115 aa).

This sequence belongs to the universal ribosomal protein uL18 family. In terms of assembly, part of the 50S ribosomal subunit; part of the 5S rRNA/L5/L18/L25 subcomplex. Contacts the 5S and 23S rRNAs.

In terms of biological role, this is one of the proteins that bind and probably mediate the attachment of the 5S RNA into the large ribosomal subunit, where it forms part of the central protuberance. The chain is Large ribosomal subunit protein uL18 from Mycoplasma genitalium (strain ATCC 33530 / DSM 19775 / NCTC 10195 / G37) (Mycoplasmoides genitalium).